A 158-amino-acid chain; its full sequence is Superoxide dismutase [Cu-Zn] (158 aa).

Residues histidine 46, histidine 48, and histidine 63 each contribute to the Cu cation site. Cysteines 57 and 149 form a disulfide. Residues histidine 63, histidine 71, histidine 80, and aspartate 83 each contribute to the Zn(2+) site. Residue histidine 120 coordinates Cu cation.

Belongs to the Cu-Zn superoxide dismutase family. Homodimer. Cu cation serves as cofactor. It depends on Zn(2+) as a cofactor.

It is found in the cytoplasm. It catalyses the reaction 2 superoxide + 2 H(+) = H2O2 + O2. Its function is as follows. Destroys radicals which are normally produced within the cells and which are toxic to biological systems. This Brugia pahangi (Filarial nematode worm) protein is Superoxide dismutase [Cu-Zn] (SODC).